The chain runs to 718 residues: uncharacterized protein (718 aa).

Transmembrane regions (helical) follow at residues 9-29 (VIST…IWFF), 60-80 (NVFF…LHIG), 83-103 (IQYI…GAVG), 136-156 (VMIL…YLFF), 391-411 (IVVF…GYWI), and 506-526 (LLDT…LWPD).

The protein belongs to the YccS/YhfK family.

It localises to the cell membrane. This is an uncharacterized protein from Haemophilus influenzae (strain ATCC 51907 / DSM 11121 / KW20 / Rd).